The primary structure comprises 494 residues: Adenosylhomocysteinase (494 aa).

Threonine 72, aspartate 155, and glutamate 217 together coordinate substrate. Threonine 218 to threonine 220 provides a ligand contact to NAD(+). 2 residues coordinate substrate: lysine 247 and aspartate 251. Residues asparagine 252, glycine 281–glycine 286, glutamate 304, asparagine 339, isoleucine 360–histidine 362, and asparagine 408 contribute to the NAD(+) site.

It belongs to the adenosylhomocysteinase family. Requires NAD(+) as cofactor.

The protein localises to the cytoplasm. It carries out the reaction S-adenosyl-L-homocysteine + H2O = L-homocysteine + adenosine. It functions in the pathway amino-acid biosynthesis; L-homocysteine biosynthesis; L-homocysteine from S-adenosyl-L-homocysteine: step 1/1. Functionally, may play a key role in the regulation of the intracellular concentration of adenosylhomocysteine. This Nocardia farcinica (strain IFM 10152) protein is Adenosylhomocysteinase.